Here is an 82-residue protein sequence, read N- to C-terminus: Antitoxin MazE2 (82 aa).

As to quaternary structure, probably forms a complex with cognate toxin MazF2.

Antitoxin component of a type II toxin-antitoxin (TA) system. Labile antitoxin that binds to cognate MazF2 toxin and counteracts its endoribonuclease activity. The sequence is that of Antitoxin MazE2 (mazE2) from Mycobacterium bovis (strain ATCC BAA-935 / AF2122/97).